A 650-amino-acid chain; its full sequence is Vitrin (650 aa).

A signal peptide spans 1–26 (MGIVVPTMKASVIEVLLVLLVTGIHS). In terms of domain architecture, LCCL spans 40 to 133 (TVPQINCDVK…LSLPRWRESF (94 aa)). 2 disulfides stabilise this stretch: Cys-46–Cys-62 and Cys-66–Cys-86. The segment at 198 to 226 (RSTSKPFAASVTNSPRPQPVGHRSQEMEE) is disordered. VWFA domains are found at residues 265–450 (DLSF…VKRV) and 467–640 (DIGF…IQNI). A glycan (N-linked (GlcNAc...) asparagine) is linked at Asn-492.

In terms of assembly, binds dermatan sulfate and chondroitin sulfate.

It is found in the secreted. The protein resides in the extracellular space. The protein localises to the extracellular matrix. Its function is as follows. Promotes matrix assembly and cell adhesiveness. Plays a role in spinal cord formation by regulating the proliferation and differentiation of neural stem cells. The polypeptide is Vitrin (Vit) (Mus musculus (Mouse)).